The primary structure comprises 547 residues: Mercuric reductase (547 aa).

The 64-residue stretch at 4–67 (NSYKIPIQGM…NISAAGYQPG (64 aa)) folds into the HMA domain. A metal cation contacts are provided by C15 and C18. 3 residues coordinate FAD: A97, G117, and T122. C123 and C128 are joined by a disulfide. Residues K132, A196, D388, and V396 each coordinate FAD. Positions 544 and 545 each coordinate Hg(2+).

The protein belongs to the class-I pyridine nucleotide-disulfide oxidoreductase family. As to quaternary structure, homodimer. Requires FAD as cofactor.

The enzyme catalyses Hg + NADP(+) + H(+) = Hg(2+) + NADPH. Resistance to Hg(2+) in bacteria appears to be governed by a specialized system which includes mercuric reductase. MerA protein is responsible for volatilizing mercury as Hg(0). This chain is Mercuric reductase (merA), found in Staphylococcus aureus.